Reading from the N-terminus, the 173-residue chain is S-ribosylhomocysteine lyase (173 aa).

Fe cation is bound by residues His-54, His-58, and Cys-128.

The protein belongs to the LuxS family. As to quaternary structure, homodimer. The cofactor is Fe cation.

It catalyses the reaction S-(5-deoxy-D-ribos-5-yl)-L-homocysteine = (S)-4,5-dihydroxypentane-2,3-dione + L-homocysteine. Functionally, involved in the synthesis of autoinducer 2 (AI-2) which is secreted by bacteria and is used to communicate both the cell density and the metabolic potential of the environment. The regulation of gene expression in response to changes in cell density is called quorum sensing. Catalyzes the transformation of S-ribosylhomocysteine (RHC) to homocysteine (HC) and 4,5-dihydroxy-2,3-pentadione (DPD). This Hydrogenovibrio crunogenus (strain DSM 25203 / XCL-2) (Thiomicrospira crunogena) protein is S-ribosylhomocysteine lyase.